A 118-amino-acid chain; its full sequence is UPF0102 protein NE0711 (118 aa).

The protein belongs to the UPF0102 family.

In Nitrosomonas europaea (strain ATCC 19718 / CIP 103999 / KCTC 2705 / NBRC 14298), this protein is UPF0102 protein NE0711.